A 188-amino-acid polypeptide reads, in one-letter code: Ribosome-recycling factor (188 aa).

Belongs to the RRF family.

It localises to the cytoplasm. Responsible for the release of ribosomes from messenger RNA at the termination of protein biosynthesis. May increase the efficiency of translation by recycling ribosomes from one round of translation to another. This is Ribosome-recycling factor from Granulibacter bethesdensis (strain ATCC BAA-1260 / CGDNIH1).